We begin with the raw amino-acid sequence, 151 residues long: MEIKVESINNNFCKLSYEDIEIIMMKENEYINATRLCSSRGRDILDWMSKESSVELINELDRINRSCNDYYDYRGIVLNVVSDSETSELYVHRDLILHISHWISPLFSLKVVKFINSYIQDSYQLEYELIHKKSLMDQLKEIILLNDDNNM.

Positions 11-118 (NFCKLSYEDI…LKVVKFINSY (108 aa)) constitute a KilA-N domain.

This is an uncharacterized protein from Fowlpox virus (strain NVSL) (FPV).